We begin with the raw amino-acid sequence, 820 residues long: MSQTEHHISIEQEMRKSYLEYSLSVIIGRAIPDVRDGLKPVHRRILFAQQELGNSYTRPPKKCARIVGDVIGKYHPHGDSAVYDALVRMAQDFSMRDPLEEGQGNFGSIDGDAPAAMRYTEVRMSRLASEFLSDIDKETVDFRPNYDNSLEEPIVLPTKVPNLLLNGSSGIAVGMATNIPPHNLGELCNALLKIIDDPDVPIDNLLNIIHGPDFPTGGFIYVGQGLYDAYTKGRGTVKVRGKVEIEERKKGAQSIVIREIPFGLNKSSLVEKIAILVNERKIDGIADLRDESDRKGIRVVIELKKGVIPEIIINALYKFTPLETSFGINMLAVVDNRPQLLTIKSALTYFLDHRREVIVRRTRFELNKAEARLHILIGLIHALDHIDEVVNLIRSSSTPAEAKIRLIERFSLSEIQAQSILDMRLQRLTGLEREKLEEEMHELQTKIAWYESILGDTKILWGVIRDEVTGIKEMYTTPRRTEVIRETLTNIEIEDLIPDDDVVITLSRRGYIKRTNLAIYQQQRRGGKGVAGLHTSEDDFVQEFITTTNHQFLLLFTNKGRMHQLKVHQVPEGSRTAKGTHIANIVPLEKEEWVTTILTVREFSDNKFFLFATRKGMVKRSSASYYARSRRTGLLAVGLREDDELIMVKEVTNNDFIVLATAEGFAIRFSCEDVRNMGRGAAGVKGIALRPGDSVVACLILQEKQDTPAIMTVSNLGYGKRTSIDLYRVQTRGGKGIINFKVTQKTGLVIGAKPVSDDNALVLLTSTNKIIRMSVDEVRSAGRATMGVRLVKLDDGAYVVGFDTVDGTVDDSCDDATINT.

The Topo IIA-type catalytic domain maps to 31-496; that stretch reads IPDVRDGLKP…TLTNIEIEDL (466 aa). Residue Tyr119 is the O-(5'-phospho-DNA)-tyrosine intermediate of the active site. Positions 523-529 match the GyrA-box motif; that stretch reads QRRGGKG.

It belongs to the type II topoisomerase GyrA/ParC subunit family. In terms of assembly, heterotetramer, composed of two GyrA and two GyrB chains. In the heterotetramer, GyrA contains the active site tyrosine that forms a transient covalent intermediate with DNA, while GyrB binds cofactors and catalyzes ATP hydrolysis.

The protein resides in the cytoplasm. The enzyme catalyses ATP-dependent breakage, passage and rejoining of double-stranded DNA.. In terms of biological role, a type II topoisomerase that negatively supercoils closed circular double-stranded (ds) DNA in an ATP-dependent manner to modulate DNA topology and maintain chromosomes in an underwound state. Negative supercoiling favors strand separation, and DNA replication, transcription, recombination and repair, all of which involve strand separation. Also able to catalyze the interconversion of other topological isomers of dsDNA rings, including catenanes and knotted rings. Type II topoisomerases break and join 2 DNA strands simultaneously in an ATP-dependent manner. The chain is DNA gyrase subunit A from Lawsonia intracellularis (strain PHE/MN1-00).